A 324-amino-acid polypeptide reads, in one-letter code: Aldo-keto reductase family 1 member A1-A (324 aa).

NADP(+) is bound by residues 10–19 (GQRMPTVGLG), Thr-20, Trp-21, and Asp-44. The active-site Proton donor is Tyr-49. NADP(+) is bound by residues Ser-161, Asn-162, Ser-210, Leu-212, Ser-214, Lys-262, Ser-263, Val-264, Thr-265, Arg-268, Gln-271, and Asn-272.

It belongs to the aldo/keto reductase family.

Its subcellular location is the cytoplasm. It localises to the cytosol. The protein localises to the apical cell membrane. The enzyme catalyses a primary alcohol + NADP(+) = an aldehyde + NADPH + H(+). It carries out the reaction S-nitroso-CoA + NADPH + H(+) = sulfinamide-CoA + NADP(+). It catalyses the reaction S-nitrosoglutathione + NADPH + H(+) = S-(hydroxysulfenamide)glutathione + NADP(+). In terms of biological role, catalyzes the NADPH-dependent reduction of a wide variety of carbonyl-containing compounds to their corresponding alcohols. Displays enzymatic activity towards endogenous metabolites such as aromatic and aliphatic aldehydes, ketones, monosaccharides and bile acids. Acts as an aldehyde-detoxification enzyme. Also acts as an inhibitor of protein S-nitrosylation by mediating degradation of S-nitroso-coenzyme A (S-nitroso-CoA), a cofactor required to S-nitrosylate proteins. Also acts as a S-nitroso-glutathione reductase by catalyzing the NADPH-dependent reduction of S-nitrosoglutathione. Displays no reductase activity towards retinoids. In Danio rerio (Zebrafish), this protein is Aldo-keto reductase family 1 member A1-A (akr1a1a).